The primary structure comprises 246 residues: Exosome complex component Rrp41 (246 aa).

The protein belongs to the RNase PH family. Rrp41 subfamily. As to quaternary structure, component of the archaeal exosome complex. Forms a hexameric ring-like arrangement composed of 3 Rrp41-Rrp42 heterodimers. The hexameric ring associates with a trimer of Rrp4 and/or Csl4 subunits.

The protein resides in the cytoplasm. In terms of biological role, catalytic component of the exosome, which is a complex involved in RNA degradation. Has 3'-&gt;5' exoribonuclease activity. Can also synthesize heteromeric RNA-tails. This chain is Exosome complex component Rrp41, found in Aeropyrum pernix (strain ATCC 700893 / DSM 11879 / JCM 9820 / NBRC 100138 / K1).